The following is a 460-amino-acid chain: RING finger protein DG17 (460 aa).

The segment at 27 to 67 (CPICFEFIYKKQIYQCKSGHHACKECWEKSLETKKECMTCK) adopts an RING-type zinc-finger fold. TRAF-type zinc fingers lie at residues 141-194 (SHLI…KKEL) and 196-253 (THYK…SELQ). The stretch at 269–294 (IEKLTNQVGQSKKTHDELLKKIEDLS) forms a coiled coil. The region spanning 320–448 (GYRNKWIISN…DDKLIIEIYI (129 aa)) is the MATH domain.

This sequence belongs to the TNF receptor-associated factor family. A subfamily.

The protein localises to the cytoplasm. In terms of biological role, probable adapter protein and signal transducer that links members of the tumor necrosis factor receptor family to different signaling pathways by association with the receptor cytoplasmic domain and kinases. The chain is RING finger protein DG17 (zfaA) from Dictyostelium discoideum (Social amoeba).